Consider the following 1157-residue polypeptide: MDRSREAEMELRRGPSPPRAGRSHEVDGDKAACHSCCICGKSFPFQSSLSQHMRKHTGEKPYKCPYCDHRASQKGNLKIHIRSHRTGTLIQGHEPEAGEAQLGEMRVSEGLDGCASPTKSTSACNRVLNGAVPMDGSKILLRSSRKEVEGAASAQEDTEATVPCSFCKSRFERKKDLELHVHQAHKPFKCRLCSYVTLREESLLSHIERDHITAQVPNGSEACVENGKPELSPGEFPCEVCGQAFSQTWFLKAHMKKHRGSFDHGCHICGRRFKEPWFLKNHMKAHGPKAGSKNRPKSELDPIATINNVVQEEVIVAGLSLYEVCTKCGNLFTNLDSLNAHNAIHRKVEASRIRAPAEEGDSEDPLDTKQFFLQCLNLTPYVAGDVSPGGQAGRRVAELDPVNSYQAWQLATRGKVAEPAEYLKYGTWDEALAGDVAFDKDKREYILVSQEKRKREQDAPATQAPPRKRASVPGDPMLSGHLDPRPTSRPNRRASATTGQGKSSECFECGKIFRTYHQMVLHSRVHRRARRDRDPEGDRAARARCGSLSEGDSASQPSSPGSACAIADSPGLAEEVVDDSGEEAVPEPASGGQPRHCCSSGEVTPTALSNGDQNHKLGNNLPEKDISEPKVGSAMPSVSILENSSRETTKGPEQHRYSLDLKMPAFHPKQEVPSTTDRVDFPASMEITSLQHTLDSQAGHSKEKLSDLHKEHCGVGKRASAPDLVPLDLSMRSSRDEPSGKEACSLQAALVIHPCPYCTHKTYYPEVLWMHKRIWHRVSCSSVAPPWTQPSGHKSIRSNLVFLTRSGRTGPPPALGGKECQPLLLSRFARTQVPGGAPGSKGSSSPLGVTTKAASMPKNKESHSGGPCALWASGPDGYRQTRAGHGQEPPSAAVQGPLAKPKQEGSSRLAPSPGSGSLSRSTTPTPSVITRVGAQPSANSKPVEKLGGPAVGTGFTPPNKHSAPDSLKAKFSPQPQGQPPLKGEGGSPLPPREPSVKAAQELRTLATCAAGSRGEAALQAPPGAPPTLNSAKQEPAAEGQEKRLDILSIFKTYIPKDFATLYQGWGVSSPGPEHRGTSLTGTPRTQAHQGDFVCVECGKSFHQPSQLRAHLRAHTVVFECDGPRDSEVHTASTDAPKQGRDHTTPGTVPAGPLRKGI.

The segment covering 1 to 13 (MDRSREAEMELRR) has biased composition (basic and acidic residues). Residues 1-26 (MDRSREAEMELRRGPSPPRAGRSHEV) form a disordered region. Residues 1-420 (MDRSREAEME…ATRGKVAEPA (420 aa)) are mediates promoter DNA-binding and activation of transcription. 7 C2H2-type zinc fingers span residues 34–56 (HSCCICGKSFPFQSSLSQHMRKH), 62–84 (YKCPYCDHRASQKGNLKIHIRSH), 162–185 (VPCSFCKSRFERKKDLELHVHQAH), 188–211 (FKCRLCSYVTLREESLLSHIERDH), 236–258 (FPCEVCGQAFSQTWFLKAHMKKH), 264–286 (HGCHICGRRFKEPWFLKNHMKAH), and 323–345 (EVCTKCGNLFTNLDSLNAHNAIH). The segment covering 449–458 (SQEKRKREQD) has biased composition (basic and acidic residues). 2 disordered regions span residues 449-503 (SQEK…QGKS) and 523-653 (SRVH…KGPE). Positions 494–503 (ASATTGQGKS) are enriched in polar residues. A C2H2-type 8 zinc finger spans residues 504–526 (SECFECGKIFRTYHQMVLHSRVH). The span at 531-541 (RDRDPEGDRAA) shows a compositional bias: basic and acidic residues. Polar residues predominate over residues 550 to 561 (EGDSASQPSSPG). Over residues 575–585 (EVVDDSGEEAV) the composition is skewed to acidic residues. Polar residues predominate over residues 601–612 (GEVTPTALSNGD). Lysine 630 participates in a covalent cross-link: Glycyl lysine isopeptide (Lys-Gly) (interchain with G-Cter in SUMO2). Residues 644–653 (SSRETTKGPE) are compositionally biased toward basic and acidic residues. Lysine 669 is covalently cross-linked (Glycyl lysine isopeptide (Lys-Gly) (interchain with G-Cter in SUMO2)). The segment at 753 to 776 (HPCPYCTHKTYYPEVLWMHKRIWH) adopts a C2H2-type 9; atypical zinc-finger fold. 2 disordered regions span residues 831–996 (TQVP…EPSV) and 1013–1040 (RGEAALQAPPGAPPTLNSAKQEPAAEGQ). The segment covering 914–928 (GSGSLSRSTTPTPSV) has biased composition (polar residues). Residues lysine 1032 and lysine 1051 each participate in a glycyl lysine isopeptide (Lys-Gly) (interchain with G-Cter in SUMO2) cross-link. Residues 1092–1114 (FVCVECGKSFHQPSQLRAHLRAH) form a C2H2-type 10 zinc finger. A disordered region spans residues 1123–1157 (PRDSEVHTASTDAPKQGRDHTTPGTVPAGPLRKGI).

Belongs to the krueppel C2H2-type zinc-finger protein family. Interacts with PRDM16; the interaction is direct and may play a role in the transcription of brown adipose tissue-specific genes. Interacts with PWWP2B. Interacts with HDAC1; this interaction is enhanced in the presence of PWWP2B. Expressed by adipocytes more specifically in brown adipose tissue compared to white adipose tissue (WAT).

It is found in the nucleus. Its function is as follows. Transcriptional regulator that binds to the promoter and activates the transcription of genes promoting brown adipose tissue (BAT) differentiation. Among brown adipose tissue-specific genes, binds the proximal region of the promoter of the UCP1 gene to activate its transcription and thereby regulate thermogenesis. May also play a role in the cellular response to replication stress. This chain is Zinc finger protein 516, found in Mus musculus (Mouse).